The primary structure comprises 408 residues: BTB/POZ and MATH domain-containing protein 3 (408 aa).

The region spanning 24–158 (NGSHQFTIQG…DDCLVINCTV (135 aa)) is the MATH domain. The BTB domain maps to 194–261 (CDIAFQVGDE…IYTDVLPNVH (68 aa)).

This sequence belongs to the Tdpoz family. As to quaternary structure, homodimer or heterodimer with BPM3 and BPM5. Interacts with CUL3A and CUL3B. Interacts with RAP2-4 and RAP2-13. Binds to MYB56 at the promoter of FLOWERING LOCUS T (FT). Ubiquitous.

Its subcellular location is the nucleus. It is found in the cytoplasm. It participates in protein modification; protein ubiquitination. Its function is as follows. May act as a substrate-specific adapter of an E3 ubiquitin-protein ligase complex (CUL3-RBX1-BTB) which mediates the ubiquitination and subsequent proteasomal degradation of target proteins. This chain is BTB/POZ and MATH domain-containing protein 3, found in Arabidopsis thaliana (Mouse-ear cress).